The primary structure comprises 404 residues: Cysteine desulfurase IscS (404 aa).

Pyridoxal 5'-phosphate-binding positions include 75–76, Asn155, Gln183, and 203–205; these read AT and SSH. Lys206 carries the post-translational modification N6-(pyridoxal phosphate)lysine. A pyridoxal 5'-phosphate-binding site is contributed by Thr243. Cys328 acts as the Cysteine persulfide intermediate in catalysis. Residue Cys328 coordinates [2Fe-2S] cluster.

The protein belongs to the class-V pyridoxal-phosphate-dependent aminotransferase family. NifS/IscS subfamily. As to quaternary structure, homodimer. Forms a heterotetramer with IscU, interacts with other sulfur acceptors. Requires pyridoxal 5'-phosphate as cofactor.

The protein resides in the cytoplasm. It carries out the reaction (sulfur carrier)-H + L-cysteine = (sulfur carrier)-SH + L-alanine. It participates in cofactor biosynthesis; iron-sulfur cluster biosynthesis. In terms of biological role, master enzyme that delivers sulfur to a number of partners involved in Fe-S cluster assembly, tRNA modification or cofactor biosynthesis. Catalyzes the removal of elemental sulfur atoms from cysteine to produce alanine. Functions as a sulfur delivery protein for Fe-S cluster synthesis onto IscU, an Fe-S scaffold assembly protein, as well as other S acceptor proteins. This chain is Cysteine desulfurase IscS, found in Pasteurella multocida (strain Pm70).